Consider the following 203-residue polypeptide: Lipoprotein MlpJ (203 aa).

The N-terminal stretch at 1–17 is a signal peptide; it reads MKIINILFCISLLLLNS. C18 is lipidated: N-palmitoyl cysteine. The S-diacylglycerol cysteine moiety is linked to residue C18. The interval 26–47 is disordered; sequence LKNNAQQTKSRKKRDLSQEELP.

Belongs to the Multicopy lipoprotein (Mlp) family.

The protein resides in the cell outer membrane. Its function is as follows. An outer membrane protein that may participate in pathogenesis. Some human Lyme disease patients have antibodies against this protein. The Mlp proteins probably undergo intragenic recombination, generating new alleles. In Borreliella burgdorferi (strain ATCC 35210 / DSM 4680 / CIP 102532 / B31) (Borrelia burgdorferi), this protein is Lipoprotein MlpJ.